Here is a 273-residue protein sequence, read N- to C-terminus: 3-methyl-2-oxobutanoate hydroxymethyltransferase (273 aa).

Mg(2+)-binding residues include Asp41 and Asp80. 3-methyl-2-oxobutanoate is bound by residues Asp41–Ser42, Asp80, and Lys110. A Mg(2+)-binding site is contributed by Glu112. Catalysis depends on Glu180, which acts as the Proton acceptor.

Belongs to the PanB family. Homodecamer; pentamer of dimers. The cofactor is Mg(2+).

It localises to the cytoplasm. It carries out the reaction 3-methyl-2-oxobutanoate + (6R)-5,10-methylene-5,6,7,8-tetrahydrofolate + H2O = 2-dehydropantoate + (6S)-5,6,7,8-tetrahydrofolate. Its pathway is cofactor biosynthesis; (R)-pantothenate biosynthesis; (R)-pantoate from 3-methyl-2-oxobutanoate: step 1/2. Functionally, catalyzes the reversible reaction in which hydroxymethyl group from 5,10-methylenetetrahydrofolate is transferred onto alpha-ketoisovalerate to form ketopantoate. In Deinococcus geothermalis (strain DSM 11300 / CIP 105573 / AG-3a), this protein is 3-methyl-2-oxobutanoate hydroxymethyltransferase.